A 417-amino-acid polypeptide reads, in one-letter code: 3-isopropylmalate dehydratase large subunit (417 aa).

Residues Cys-298, Cys-358, and Cys-361 each coordinate [4Fe-4S] cluster.

Belongs to the aconitase/IPM isomerase family. LeuC type 2 subfamily. Heterodimer of LeuC and LeuD. The cofactor is [4Fe-4S] cluster.

It catalyses the reaction (2R,3S)-3-isopropylmalate = (2S)-2-isopropylmalate. It functions in the pathway amino-acid biosynthesis; L-leucine biosynthesis; L-leucine from 3-methyl-2-oxobutanoate: step 2/4. Functionally, catalyzes the isomerization between 2-isopropylmalate and 3-isopropylmalate, via the formation of 2-isopropylmaleate. The chain is 3-isopropylmalate dehydratase large subunit from Thermoanaerobacter pseudethanolicus (strain ATCC 33223 / 39E) (Clostridium thermohydrosulfuricum).